Reading from the N-terminus, the 60-residue chain is Large ribosomal subunit protein uL30 (60 aa).

The protein belongs to the universal ribosomal protein uL30 family. Part of the 50S ribosomal subunit.

This is Large ribosomal subunit protein uL30 from Streptomyces griseus subsp. griseus (strain JCM 4626 / CBS 651.72 / NBRC 13350 / KCC S-0626 / ISP 5235).